The sequence spans 588 residues: Aspartate--tRNA ligase (588 aa).

Glu172 contacts L-aspartate. An aspartate region spans residues Gln196 to Lys199. Residue Arg218 participates in L-aspartate binding. Residues Arg218–Glu220 and Gln227 contribute to the ATP site. His449 serves as a coordination point for L-aspartate. Position 483 (Glu483) interacts with ATP. Arg490 contacts L-aspartate. Gly535–Arg538 contributes to the ATP binding site.

Belongs to the class-II aminoacyl-tRNA synthetase family. Type 1 subfamily. Homodimer.

The protein resides in the cytoplasm. It carries out the reaction tRNA(Asp) + L-aspartate + ATP = L-aspartyl-tRNA(Asp) + AMP + diphosphate. In terms of biological role, catalyzes the attachment of L-aspartate to tRNA(Asp) in a two-step reaction: L-aspartate is first activated by ATP to form Asp-AMP and then transferred to the acceptor end of tRNA(Asp). In Pasteurella multocida (strain Pm70), this protein is Aspartate--tRNA ligase.